Here is a 433-residue protein sequence, read N- to C-terminus: Enolase (433 aa).

Q167 contacts (2R)-2-phosphoglycerate. Catalysis depends on E209, which acts as the Proton donor. The Mg(2+) site is built by D246, E291, and D318. The (2R)-2-phosphoglycerate site is built by K343, R372, S373, and K394. Residue K343 is the Proton acceptor of the active site.

This sequence belongs to the enolase family. Component of the RNA degradosome, a multiprotein complex involved in RNA processing and mRNA degradation. It depends on Mg(2+) as a cofactor.

It is found in the cytoplasm. Its subcellular location is the secreted. The protein localises to the cell surface. The catalysed reaction is (2R)-2-phosphoglycerate = phosphoenolpyruvate + H2O. It participates in carbohydrate degradation; glycolysis; pyruvate from D-glyceraldehyde 3-phosphate: step 4/5. In terms of biological role, catalyzes the reversible conversion of 2-phosphoglycerate (2-PG) into phosphoenolpyruvate (PEP). It is essential for the degradation of carbohydrates via glycolysis. The sequence is that of Enolase from Photorhabdus laumondii subsp. laumondii (strain DSM 15139 / CIP 105565 / TT01) (Photorhabdus luminescens subsp. laumondii).